A 186-amino-acid chain; its full sequence is ATP-dependent protease subunit HslV (186 aa).

Residue threonine 14 is part of the active site. Positions 168, 171, and 174 each coordinate Na(+).

The protein belongs to the peptidase T1B family. HslV subfamily. In terms of assembly, a double ring-shaped homohexamer of HslV is capped on each side by a ring-shaped HslU homohexamer. The assembly of the HslU/HslV complex is dependent on binding of ATP.

The protein localises to the cytoplasm. It carries out the reaction ATP-dependent cleavage of peptide bonds with broad specificity.. Its activity is regulated as follows. Allosterically activated by HslU binding. In terms of biological role, protease subunit of a proteasome-like degradation complex believed to be a general protein degrading machinery. This chain is ATP-dependent protease subunit HslV, found in Bradyrhizobium sp. (strain BTAi1 / ATCC BAA-1182).